The primary structure comprises 802 residues: Cell division cycle 5-like protein (802 aa).

HTH myb-type domains follow at residues 1 to 56 (MPRI…WLDP) and 57 to 108 (SIKK…DKAA). 2 consecutive DNA-binding regions (H-T-H motif) follow at residues 31 to 54 (WSRI…YEWL) and 82 to 104 (WRTI…EFLL). Residues 108 to 143 (AQRDNEEETTDDPRKLKPGEIDPNPETKPARPDPID) are disordered. The span at 118 to 127 (DDPRKLKPGE) shows a compositional bias: basic and acidic residues. K135 participates in a covalent cross-link: Glycyl lysine isopeptide (Lys-Gly) (interchain with G-Cter in SUMO2). Positions 142–245 (IDMDEDELEM…DADFRKLRQQ (104 aa)) form a coiled coil. The short motif at 165–271 (KKAKRKAREK…KDKQHLKRKK (107 aa)) is the Nuclear localization signal element. The interval 200–206 (KKRKKKR) is required for interaction with CTNNBL1. Residue K219 forms a Glycyl lysine isopeptide (Lys-Gly) (interchain with G-Cter in SUMO2) linkage. At T227 the chain carries Phosphothreonine. Residues 246–262 (DLDGELRSEKEGRDRKK) show a composition bias toward basic and acidic residues. The tract at residues 246–278 (DLDGELRSEKEGRDRKKDKQHLKRKKESDLPSA) is disordered. Positions 260 to 606 (RKKDKQHLKR…NKKGKTVGFG (347 aa)) are interaction with PPP1R8. Phosphoserine is present on residues S303 and S358. Residues T377, T385, T396, T404, T411, and T415 each carry the phosphothreonine modification. Residues 409 to 418 (LSTPFRTPSH) show a composition bias toward polar residues. The segment at 409 to 459 (LSTPFRTPSHGSEGLTPRSGTTPKPVINSTPGRTPLRDKLNINPEDGMADY) is disordered. S417 carries the post-translational modification Phosphoserine. 2 positions are modified to phosphothreonine: T424 and T430. Over residues 426–440 (RSGTTPKPVINSTPG) the composition is skewed to polar residues. S437 carries the phosphoserine modification. 2 positions are modified to phosphothreonine: T438 and T442. Residue K487 forms a Glycyl lysine isopeptide (Lys-Gly) (interchain with G-Cter in SUMO2) linkage. The interaction with DAPK3 stretch occupies residues 501–659 (ELEEREIDDT…GELSSEAYNQ (159 aa)). Coiled coils occupy residues 676 to 701 (RYTR…INRG) and 764 to 802 (PRRL…KAKF). The tract at residues 706-800 (EAKRAAKMEK…LLLEKETLKA (95 aa)) is interaction with PLRG1.

It belongs to the CEF1 family. Homodimer. Interacts with DAPK3. Component of the precatalytic, catalytic and postcatalytic spliceosome complexes. Part of a spliceosomal 'core' complex consisting of CDC5L, PLRG1, SPF27, CCAP1, CCAP3 and CCAP6. Interacts with PLRG1, Lodestar/TTF2, and NIPP1/PPP1R8. Component of the minor spliceosome, which splices U12-type introns. Within this complex, interacts with SCNM1. Component of the PRP19-CDC5L splicing complex composed of a core complex comprising a homotetramer of PRPF19, CDC5L, PLRG1 and BCAS2, and at least three less stably associated proteins CTNNBL1, CWC15 and HSPA8. Interacts (via its C-terminus) directly in the complex with PRPF19 and BCAS2. Interacts (via its C-terminus) directly with PRGL1 (via its WD40 repeat domain); the interaction is required for mRNA splicing but not for spliceosome assembly. Also interacts with CTNNBL1. Interacts with PRPF19 (via N-terminus). Interacts with USB1. Interacts with DDX41. Phosphorylated on serine and threonine residues. Phosphorylation on Thr-411 and Thr-438 is required for CDC5L-mediated mRNA splicing. Has no effect on subcellular location nor on homodimerization. Phosphorylated in vitro by CDK2. Phosphorylation enhances interaction with PPP1R8.

It is found in the nucleus. The protein localises to the nucleus speckle. The protein resides in the cytoplasm. Its function is as follows. DNA-binding protein involved in cell cycle control. May act as a transcription activator. Plays a role in pre-mRNA splicing as core component of precatalytic, catalytic and postcatalytic spliceosomal complexes. Component of the PRP19-CDC5L complex that forms an integral part of the spliceosome and is required for activating pre-mRNA splicing. The PRP19-CDC5L complex may also play a role in the response to DNA damage (DDR). As a component of the minor spliceosome, involved in the splicing of U12-type introns in pre-mRNAs. The protein is Cell division cycle 5-like protein (CDC5L) of Bos taurus (Bovine).